Consider the following 222-residue polypeptide: Putative adhesin RP828 (222 aa).

Positions 1–22 (MKKLLLIATASATILSSSVSFA) are cleaved as a signal peptide.

In terms of biological role, adheres to biotinylated epithelial (Vero cell) proteins. In Rickettsia prowazekii (strain Madrid E), this protein is Putative adhesin RP828.